The following is a 694-amino-acid chain: MAKTYLLEIGLEEMPAHVVTPSVLQLKERMIKFLKDARLDFEDVKTFSTPRRLTVQVLGLADKQADVKKEVRGPAKKIAQDADGNWTKAAIGFSKGQGASTDDIVFKDVKGTPYVFVQTFTAGKTAAEVLTGGIKDVITKMNFPTMMKWSTYSFKYIRPIRWIVSLLDDEVVPVQILDVAAGRVSRGHRFLGHDVEIATAADYEADLASVQVVADAAKRKATIREQIAALANERDWQIKVNEDLLEEVNNLVEYPTAFAGDFDTKYLTIPDEVLITSMRDHQRFFYVTDAEDNLLPHFVSVRNGNTDHLENVALGNQKVLTARLEDAAFFYHEDQQHSIQEYVERLKKVSFHDKIGTMYEKMQRVMIISDFLADRFGLTETEKNQLHRAAQIYKFDLVTGMVGEFPELQGVMGDKYAVLKGEDPAVGQAIREHYMPISADGDLPKSKVGAVLAIADKVDSITSFFAVGLTPSGSNDPFALRRQAFGIVRIVREQGWDFPIRQLEADIQKELVAHDATYNLDFEKQTAPVADFLTDRVKQWFNNRKIRYDIVDTVIKGSRQDIREMFKAADVLNAHQDDPQFKDTIEAFTRLLRITAKAKLAADDLTVDPSLFENEAEQHLYDAVLELQKQFTPAMSMEDRFKALAALRPLIVDYFEQTMVMSKDEKVRDNHLKQLLTIAQMINVMGDLNQLIVK.

This sequence belongs to the class-II aminoacyl-tRNA synthetase family. In terms of assembly, tetramer of two alpha and two beta subunits.

It localises to the cytoplasm. The catalysed reaction is tRNA(Gly) + glycine + ATP = glycyl-tRNA(Gly) + AMP + diphosphate. This Lactiplantibacillus plantarum (strain ATCC BAA-793 / NCIMB 8826 / WCFS1) (Lactobacillus plantarum) protein is Glycine--tRNA ligase beta subunit.